The chain runs to 303 residues: Phosphate import ATP-binding protein PstB (303 aa).

The ABC transporter domain maps to 56–298 (LSTSDVHVYY…PDHQLTEAYI (243 aa)). 88-95 (GPSGCGKS) contributes to the ATP binding site.

This sequence belongs to the ABC transporter superfamily. Phosphate importer (TC 3.A.1.7) family. In terms of assembly, the complex is composed of two ATP-binding proteins (PstB), two transmembrane proteins (PstC and PstA) and a solute-binding protein (PstS).

The protein resides in the cell inner membrane. It carries out the reaction phosphate(out) + ATP + H2O = ADP + 2 phosphate(in) + H(+). Part of the ABC transporter complex PstSACB involved in phosphate import. Responsible for energy coupling to the transport system. The polypeptide is Phosphate import ATP-binding protein PstB (Acinetobacter baylyi (strain ATCC 33305 / BD413 / ADP1)).